A 343-amino-acid polypeptide reads, in one-letter code: 5-amino-6-(D-ribitylamino)uracil--L-tyrosine 4-hydroxyphenyl transferase (343 aa).

One can recognise a Radical SAM core domain in the interval 39–268 (VTYVVNRNIN…AIARILLYPE (230 aa)). Positions 53, 57, and 60 each coordinate [4Fe-4S] cluster.

This sequence belongs to the radical SAM superfamily. CofH family. In terms of assembly, consists of two subunits, CofG and CofH. [4Fe-4S] cluster is required as a cofactor.

It catalyses the reaction 5-amino-6-(D-ribitylamino)uracil + L-tyrosine + S-adenosyl-L-methionine = 5-amino-5-(4-hydroxybenzyl)-6-(D-ribitylimino)-5,6-dihydrouracil + 2-iminoacetate + 5'-deoxyadenosine + L-methionine + H(+). It participates in cofactor biosynthesis; coenzyme F0 biosynthesis. Functionally, catalyzes the radical-mediated synthesis of 5-amino-5-(4-hydroxybenzyl)-6-(D-ribitylimino)-5,6-dihydrouracil from 5-amino-6-(D-ribitylamino)uracil and L-tyrosine. The polypeptide is 5-amino-6-(D-ribitylamino)uracil--L-tyrosine 4-hydroxyphenyl transferase (Archaeoglobus fulgidus (strain ATCC 49558 / DSM 4304 / JCM 9628 / NBRC 100126 / VC-16)).